The following is a 314-amino-acid chain: uncharacterized protein (314 aa).

An N-terminal signal peptide occupies residues 1-26 (MRGRVAGSCAPLGLLLVCLRLPGLFA). Polar residues predominate over residues 41–60 (GTNLPQLGQPSLTGPPNSEH). Disordered regions lie at residues 41–65 (GTNL…QPAL), 77–96 (LKLS…SAVQ), 147–191 (GSGP…GKIL), and 292–314 (PPGS…LQWG). Low complexity predominate over residues 147 to 157 (GSGPLPGESSP). A compositionally biased stretch (basic and acidic residues) spans 167-177 (SHLHQDSESRR). Over residues 303 to 314 (FPNPPSPGLQWG) the composition is skewed to pro residues.

In terms of assembly, binds to numerous extracellular matrix proteins. In terms of tissue distribution, taste cell specific.

It localises to the secreted. The protein localises to the extracellular space. The protein resides in the extracellular matrix. This is an uncharacterized protein from Macaca mulatta (Rhesus macaque).